Here is a 151-residue protein sequence, read N- to C-terminus: UPF0178 protein Swoo_1444 (151 aa).

The protein belongs to the UPF0178 family.

The protein is UPF0178 protein Swoo_1444 of Shewanella woodyi (strain ATCC 51908 / MS32).